The chain runs to 40 residues: Probable non-specific lipid-transfer protein (40 aa).

The protein belongs to the plant LTP family. In terms of processing, phosphorylated by Ca(2+)-dependent protein kinase.

In terms of biological role, plant non-specific lipid-transfer proteins transfer phospholipids as well as galactolipids across membranes. May play a role in wax or cutin deposition in the cell walls of expanding epidermal cells and certain secretory tissues. This is Probable non-specific lipid-transfer protein from Triticum aestivum (Wheat).